The primary structure comprises 1032 residues: Probable ATP-dependent RNA helicase DDX46 (1032 aa).

Residues 1–24 (MGRESRHYRKRSASRGRSGSRSRS) show a composition bias toward basic residues. The segment at 1–227 (MGRESRHYRK…NEMEDEELDP (227 aa)) is disordered. The N-myristoyl glycine moiety is linked to residue G2. The segment covering 26 to 49 (SPSDKRSKRGDDRRSRSRDRDRRR) has biased composition (basic and acidic residues). Basic residues-rich tracts occupy residues 50-73 (ERSRSRDKRRSRSRDRKRLRRSRS) and 81-103 (ERRRSRSRDRRRSRSRSRGRRSR). Basic and acidic residues predominate over residues 112 to 200 (KKAENRSRSK…EMKQGKKWSL (89 aa)). Residues 152–197 (DQNKLEEEMRKRKERVEKWREEQRKKAMENIGELKKEIEEMKQGKK) adopt a coiled-coil conformation. K186 participates in a covalent cross-link: Glycyl lysine isopeptide (Lys-Gly) (interchain with G-Cter in SUMO2). Position 199 is a phosphoserine (S199). Positions 201-211 (EDDDDDEDDPA) are enriched in acidic residues. K263 carries the post-translational modification N6-acetyllysine. Y294 is subject to Phosphotyrosine. Phosphoserine occurs at positions 295 and 296. Residue K325 forms a Glycyl lysine isopeptide (Lys-Gly) (interchain with G-Cter in SUMO2) linkage. Phosphoserine is present on S346. The short motif at 372–400 (KSWVQCGISMKILNSLKKHGYEKPTPIQT) is the Q motif element. Residues 403 to 581 (IPAIMSGRDL…RRILSKPIEV (179 aa)) enclose the Helicase ATP-binding domain. The DEAD box signature appears at 529–532 (DEAD). Residues 592–753 (DVEQQVIVIE…AVPPDLEKLW (162 aa)) form the Helicase C-terminal domain. K776 is modified (N6-acetyllysine). A Glycyl lysine isopeptide (Lys-Gly) (interchain with G-Cter in SUMO2) cross-link involves residue K779. S804 bears the Phosphoserine mark. An N6-acetyllysine modification is found at K904. Residues K908 and K916 each participate in a glycyl lysine isopeptide (Lys-Gly) (interchain with G-Cter in SUMO2) cross-link. S929 is modified (phosphoserine).

It belongs to the DEAD box helicase family. DDX46/PRP5 subfamily. Component of the 17S U2 SnRNP complex, a ribonucleoprotein complex that contains small nuclear RNA (snRNA) U2 and a number of specific proteins. Within the 17S U2 SnRNP complex, DDX46 is part of the SF3B subcomplex, which is required for 'A' complex assembly formed by the stable binding of U2 snRNP to the branchpoint sequence in pre-mRNA. Recruited to the 17S U2 SnRNP complex following release of DDX42; DDX42 and DDX46 bind the SF3B subcomplex in a competitive manner.

The protein localises to the nucleus speckle. The protein resides in the nucleus. Its subcellular location is the cajal body. The catalysed reaction is ATP + H2O = ADP + phosphate + H(+). In terms of biological role, component of the 17S U2 SnRNP complex of the spliceosome, a large ribonucleoprotein complex that removes introns from transcribed pre-mRNAs. The 17S U2 SnRNP complex (1) directly participates in early spliceosome assembly and (2) mediates recognition of the intron branch site during pre-mRNA splicing by promoting the selection of the pre-mRNA branch-site adenosine, the nucleophile for the first step of splicing. Within the 17S U2 SnRNP complex, DDX46 plays essential roles during assembly of pre-spliceosome and proofreading of the branch site. The sequence is that of Probable ATP-dependent RNA helicase DDX46 (Ddx46) from Rattus norvegicus (Rat).